The following is a 201-amino-acid chain: 3-isopropylmalate dehydratase small subunit (201 aa).

This sequence belongs to the LeuD family. LeuD type 1 subfamily. As to quaternary structure, heterodimer of LeuC and LeuD.

The catalysed reaction is (2R,3S)-3-isopropylmalate = (2S)-2-isopropylmalate. The protein operates within amino-acid biosynthesis; L-leucine biosynthesis; L-leucine from 3-methyl-2-oxobutanoate: step 2/4. In terms of biological role, catalyzes the isomerization between 2-isopropylmalate and 3-isopropylmalate, via the formation of 2-isopropylmaleate. This chain is 3-isopropylmalate dehydratase small subunit, found in Thermus thermophilus (strain ATCC BAA-163 / DSM 7039 / HB27).